Consider the following 393-residue polypeptide: NAD(P)H-quinone oxidoreductase subunit H, chloroplastic (393 aa).

This sequence belongs to the complex I 49 kDa subunit family. NDH is composed of at least 16 different subunits, 5 of which are encoded in the nucleus.

It is found in the plastid. The protein localises to the chloroplast thylakoid membrane. It carries out the reaction a plastoquinone + NADH + (n+1) H(+)(in) = a plastoquinol + NAD(+) + n H(+)(out). The catalysed reaction is a plastoquinone + NADPH + (n+1) H(+)(in) = a plastoquinol + NADP(+) + n H(+)(out). NDH shuttles electrons from NAD(P)H:plastoquinone, via FMN and iron-sulfur (Fe-S) centers, to quinones in the photosynthetic chain and possibly in a chloroplast respiratory chain. The immediate electron acceptor for the enzyme in this species is believed to be plastoquinone. Couples the redox reaction to proton translocation, and thus conserves the redox energy in a proton gradient. In Lepidium virginicum (Virginia pepperweed), this protein is NAD(P)H-quinone oxidoreductase subunit H, chloroplastic.